A 534-amino-acid polypeptide reads, in one-letter code: Calcium-dependent protein kinase 29 (534 aa).

Positions 1 to 72 (MGFCFSKFGK…STSSGSQIGP (72 aa)) are disordered. Glycine 2 carries N-myristoyl glycine lipidation. Residues 16 to 27 (IPISSSSDSSPP) are compositionally biased toward low complexity. A compositionally biased stretch (pro residues) spans 49–63 (NPQPKPKPAPPPPPS). The region spanning 85-343 (YDLHKELGRG…AAEALEHPWM (259 aa)) is the Protein kinase domain. Residues 91–99 (LGRGQFGIT) and lysine 114 each bind ATP. The Proton acceptor role is filled by aspartate 209. Serine 249 is modified (phosphoserine). Residues 348–378 (ISDKPINSAVLVRMKQFRAMNKLKKLALKVI) form an autoinhibitory domain region. EF-hand domains follow at residues 385-420 (EEIK…LGSK), 421-456 (LTES…RHRL), 457-492 (EKEE…YGMG), and 493-527 (DDAT…GTTD). Aspartate 398, aspartate 400, serine 402, threonine 404, glutamate 409, aspartate 434, aspartate 436, serine 438, threonine 440, glutamate 445, aspartate 470, aspartate 472, serine 474, glutamate 481, aspartate 505, aspartate 507, aspartate 509, arginine 511, and glutamate 516 together coordinate Ca(2+).

This sequence belongs to the protein kinase superfamily. Ser/Thr protein kinase family. CDPK subfamily.

The protein resides in the membrane. The enzyme catalyses L-seryl-[protein] + ATP = O-phospho-L-seryl-[protein] + ADP + H(+). The catalysed reaction is L-threonyl-[protein] + ATP = O-phospho-L-threonyl-[protein] + ADP + H(+). With respect to regulation, activated by calcium. Autophosphorylation may play an important role in the regulation of the kinase activity. May play a role in signal transduction pathways that involve calcium as a second messenger. The chain is Calcium-dependent protein kinase 29 (CPK29) from Arabidopsis thaliana (Mouse-ear cress).